The sequence spans 437 residues: Na(+)/H(+) antiporter NhaA (437 aa).

A run of 11 helical transmembrane segments spans residues 29–49 (TAGI…NTAW), 74–94 (LKHW…ALEL), 111–131 (LPVA…LLLV), 139–159 (GWGT…ALLG), 168–188 (LFLL…VAVG), 196–216 (VALG…LLGI), 229–249 (IWLA…ILGL), 307–327 (IALH…SNAG), 341–361 (IAIV…FSFL), 376–396 (WSLL…ALFI), and 411–431 (LGVL…LTLL).

Belongs to the NhaA Na(+)/H(+) (TC 2.A.33) antiporter family.

It is found in the cell inner membrane. It catalyses the reaction Na(+)(in) + 2 H(+)(out) = Na(+)(out) + 2 H(+)(in). Functionally, na(+)/H(+) antiporter that extrudes sodium in exchange for external protons. In Rhizobium meliloti (strain 1021) (Ensifer meliloti), this protein is Na(+)/H(+) antiporter NhaA.